The following is a 545-amino-acid chain: GMP synthase [glutamine-hydrolyzing] (545 aa).

In terms of domain architecture, Glutamine amidotransferase type-1 spans threonine 17 to aspartate 211. The Nucleophile role is filled by cysteine 93. Active-site residues include histidine 185 and glutamate 187. Positions tryptophan 212–arginine 420 constitute a GMPS ATP-PPase domain. Serine 240–threonine 246 contributes to the ATP binding site. XMP contacts are provided by arginine 313, aspartate 482, lysine 537, and glutamate 543.

Homodimer. Mg(2+) is required as a cofactor.

It is found in the cytoplasm. The protein localises to the cytosol. The catalysed reaction is XMP + L-glutamine + ATP + H2O = GMP + L-glutamate + AMP + diphosphate + 2 H(+). Its pathway is purine metabolism; GMP biosynthesis; GMP from XMP (L-Gln route): step 1/1. Catalyzes the conversion of xanthine monophosphate (XMP) to GMP in the presence of glutamine and ATP through an adenyl-XMP intermediate. The sequence is that of GMP synthase [glutamine-hydrolyzing] (GUA1) from Gibberella zeae (strain ATCC MYA-4620 / CBS 123657 / FGSC 9075 / NRRL 31084 / PH-1) (Wheat head blight fungus).